A 362-amino-acid polypeptide reads, in one-letter code: Probable dual-specificity RNA methyltransferase RlmN (362 aa).

Glu105 serves as the catalytic Proton acceptor. The 234-residue stretch at 111-344 (HNYGNSVCVT…VTIRREQGHD (234 aa)) folds into the Radical SAM core domain. Cys118 and Cys349 are disulfide-bonded. Positions 125, 129, and 132 each coordinate [4Fe-4S] cluster. Residues 175–176 (GE), Ser207, 230–232 (SLH), and Asn306 each bind S-adenosyl-L-methionine. Cys349 acts as the S-methylcysteine intermediate in catalysis.

The protein belongs to the radical SAM superfamily. RlmN family. The cofactor is [4Fe-4S] cluster.

The protein resides in the cytoplasm. The catalysed reaction is adenosine(2503) in 23S rRNA + 2 reduced [2Fe-2S]-[ferredoxin] + 2 S-adenosyl-L-methionine = 2-methyladenosine(2503) in 23S rRNA + 5'-deoxyadenosine + L-methionine + 2 oxidized [2Fe-2S]-[ferredoxin] + S-adenosyl-L-homocysteine. It carries out the reaction adenosine(37) in tRNA + 2 reduced [2Fe-2S]-[ferredoxin] + 2 S-adenosyl-L-methionine = 2-methyladenosine(37) in tRNA + 5'-deoxyadenosine + L-methionine + 2 oxidized [2Fe-2S]-[ferredoxin] + S-adenosyl-L-homocysteine. In terms of biological role, specifically methylates position 2 of adenine 2503 in 23S rRNA and position 2 of adenine 37 in tRNAs. This chain is Probable dual-specificity RNA methyltransferase RlmN, found in Halalkalibacterium halodurans (strain ATCC BAA-125 / DSM 18197 / FERM 7344 / JCM 9153 / C-125) (Bacillus halodurans).